A 382-amino-acid chain; its full sequence is Galactokinase (382 aa).

34 to 37 (EHTD) is a substrate binding site. 124 to 130 (GAGLSSS) contacts ATP. Residues Ser130 and Glu162 each contribute to the Mg(2+) site. The active-site Proton acceptor is the Asp174. Tyr223 contacts substrate.

The protein belongs to the GHMP kinase family. GalK subfamily.

It localises to the cytoplasm. The catalysed reaction is alpha-D-galactose + ATP = alpha-D-galactose 1-phosphate + ADP + H(+). It participates in carbohydrate metabolism; galactose metabolism. In terms of biological role, catalyzes the transfer of the gamma-phosphate of ATP to D-galactose to form alpha-D-galactose-1-phosphate (Gal-1-P). This chain is Galactokinase, found in Salmonella schwarzengrund (strain CVM19633).